A 683-amino-acid polypeptide reads, in one-letter code: Cytoskeleton-associated protein 2 (683 aa).

Disordered regions lie at residues 1 to 28 (MSTP…QRRQ) and 153 to 175 (NSKK…KKPV). 2 positions are modified to phosphoserine: S178 and S190. 2 disordered regions span residues 214 to 236 (KATK…SSNM) and 336 to 403 (EKSE…EKPV). Residues 219–236 (QPVNTSSVTVKSNRSSNM) are compositionally biased toward polar residues. 2 stretches are compositionally biased toward basic and acidic residues: residues 336 to 345 (EKSEPVDQRR) and 362 to 376 (ETSE…EWKA). Residue S534 is modified to Phosphoserine. Phosphothreonine occurs at positions 579 and 582. S595 carries the post-translational modification Phosphoserine. Phosphothreonine occurs at positions 596 and 597. A Phosphotyrosine modification is found at Y599. Position 602 is a phosphoserine (S602).

The protein belongs to the CKAP2 family. Associates with alpha- and beta-tubulins. In terms of tissue distribution, abundant in testis, thymus, and in tumor derived cell lines, while barely detectable in liver, prostate, and kidney.

It is found in the cytoplasm. It localises to the cytoskeleton. Its subcellular location is the spindle. The protein localises to the spindle pole. Its function is as follows. Possesses microtubule stabilizing properties. Involved in regulating aneuploidy, cell cycling, and cell death in a p53/TP53-dependent manner. This chain is Cytoskeleton-associated protein 2, found in Homo sapiens (Human).